A 597-amino-acid chain; its full sequence is Protein Spindly (597 aa).

Met1 carries the N-acetylmethionine modification. Residues 1–445 (MEADITNLRN…LKLKYEPEER (445 aa)) adopt a coiled-coil conformation. Ser508 and Ser547 each carry phosphoserine. Residues 531 to 597 (PASTEVLHEQ…STPEMQCPQQ (67 aa)) are disordered. Positions 540–549 (QSGNTPSSPR) are enriched in polar residues. Residues 550-574 (LTEESRLPTKVKERKEATSKLEKGA) are compositionally biased toward basic and acidic residues. Over residues 583–597 (YVSSKSTPEMQCPQQ) the composition is skewed to polar residues.

This sequence belongs to the Spindly family. As to quaternary structure, interacts with KNTC1 and ZW10. These interactions appear weak and may be transient or indirect. Interacts with dynein intermediate chain and dynactin (DCTN1). Interacts with the catalytically active form of USP45. Post-translationally, monoubiquitinated with'Lys-48' linkage. Deubiquitinated by USP45.

Its subcellular location is the cytoplasm. It is found in the cytoskeleton. It localises to the microtubule organizing center. The protein localises to the centrosome. The protein resides in the chromosome. Its subcellular location is the centromere. It is found in the kinetochore. It localises to the nucleus. The protein localises to the spindle pole. In terms of biological role, required for the localization of dynein and dynactin to the mitotic kintochore. Dynein is believed to control the initial lateral interaction between the kinetochore and spindle microtubules and to facilitate the subsequent formation of end-on kinetochore-microtubule attachments mediated by the NDC80 complex. Also required for correct spindle orientation. Does not appear to be required for the removal of spindle assembly checkpoint (SAC) proteins from the kinetochore upon bipolar spindle attachment. Acts as an adapter protein linking the dynein motor complex to various cargos and converts dynein from a non-processive to a highly processive motor in the presence of dynactin. Facilitates the interaction between dynein and dynactin and activates dynein processivity (the ability to move along a microtubule for a long distance without falling off the track). Plays a role in cell migration. The polypeptide is Protein Spindly (Spdl1) (Rattus norvegicus (Rat)).